The primary structure comprises 223 residues: uncharacterized protein (223 aa).

This is an uncharacterized protein from Mycoplasma pneumoniae (strain ATCC 29342 / M129 / Subtype 1) (Mycoplasmoides pneumoniae).